The following is a 776-amino-acid chain: A-type ATP synthase subunit A (776 aa).

It belongs to the ATPase alpha/beta chains family. As to quaternary structure, has multiple subunits with at least A(3), B(3), C, D, E, F, H, I and proteolipid K(x). Post-translationally, this protein undergoes a protein self splicing that involves a post-translational excision of the VDE intervening region (intein) followed by peptide ligation.

Its subcellular location is the cell membrane. The enzyme catalyses ATP + H2O + 4 H(+)(in) = ADP + phosphate + 5 H(+)(out). Its function is as follows. Component of the A-type ATP synthase that produces ATP from ADP in the presence of a proton gradient across the membrane. The A chain is the catalytic subunit. This Thermoplasma volcanium (strain ATCC 51530 / DSM 4299 / JCM 9571 / NBRC 15438 / GSS1) protein is A-type ATP synthase subunit A.